A 482-amino-acid polypeptide reads, in one-letter code: Aspartyl/glutamyl-tRNA(Asn/Gln) amidotransferase subunit B (482 aa).

The protein belongs to the GatB/GatE family. GatB subfamily. Heterotrimer of A, B and C subunits.

The enzyme catalyses L-glutamyl-tRNA(Gln) + L-glutamine + ATP + H2O = L-glutaminyl-tRNA(Gln) + L-glutamate + ADP + phosphate + H(+). It catalyses the reaction L-aspartyl-tRNA(Asn) + L-glutamine + ATP + H2O = L-asparaginyl-tRNA(Asn) + L-glutamate + ADP + phosphate + 2 H(+). Functionally, allows the formation of correctly charged Asn-tRNA(Asn) or Gln-tRNA(Gln) through the transamidation of misacylated Asp-tRNA(Asn) or Glu-tRNA(Gln) in organisms which lack either or both of asparaginyl-tRNA or glutaminyl-tRNA synthetases. The reaction takes place in the presence of glutamine and ATP through an activated phospho-Asp-tRNA(Asn) or phospho-Glu-tRNA(Gln). The chain is Aspartyl/glutamyl-tRNA(Asn/Gln) amidotransferase subunit B from Azotobacter vinelandii (strain DJ / ATCC BAA-1303).